Here is a 1881-residue protein sequence, read N- to C-terminus: Genome polyprotein (1881 aa).

Residues 1 to 16 (MAQTLSKISNKENASS) show a composition bias toward polar residues. Positions 1-93 (MAQTLSKISN…SHLKPASTDV (93 aa)) are disordered. Basic and acidic residues predominate over residues 37 to 50 (EPLDHDSRRGRDPV). One can recognise an SF3 helicase domain in the interval 564–720 (DKVISCCTRR…DKWKSDNPGK (157 aa)). 590–597 (GPPGCGKT) provides a ligand contact to ATP. An O-(5'-phospho-RNA)-tyrosine modification is found at Tyr-1093. A Peptidase C24 domain is found at 1188–1341 (GVTHKNAIVS…KLIVPYVKVD (154 aa)). Residues His-1222, Glu-1243, and Cys-1305 each act as for 3CLpro activity in the active site. One can recognise a RdRp catalytic domain in the interval 1593 to 1718 (HDRYCVDYSK…IVPPLISSVM (126 aa)).

Homodimer. Interacts with NTPase, protein p30 and protease-polymerase p76. As to quaternary structure, interacts with capsid protein VP1 and protease-polymerase p76. Interacts with host IEF4e; this interaction plays a role in translation of viral proteins. In terms of assembly, homooligomer. Interacts with Vpg, protein p32 and may interact with capsid protein VP1. In terms of processing, specific enzymatic cleavages in vivo yield mature proteins. Pro-Pol is first autocatalytically cleaved, then processes the whole polyprotein. VPg is uridylylated by the polymerase and is covalently attached to the 5'-end of the polyadenylated genomic and subgenomic RNAs. This uridylylated form acts as a nucleotide-peptide primer for the polymerase.

It is found in the host endoplasmic reticulum membrane. It carries out the reaction a ribonucleoside 5'-triphosphate + H2O = a ribonucleoside 5'-diphosphate + phosphate + H(+). The catalysed reaction is RNA(n) + a ribonucleoside 5'-triphosphate = RNA(n+1) + diphosphate. The enzyme catalyses Endopeptidase with a preference for cleavage when the P1 position is occupied by Glu-|-Xaa and the P1' position is occupied by Gly-|-Yaa.. In terms of biological role, together with NTPase and NS4, initiates the formation of the replication complex. Induces the proliferation of the host smooth ER membranes forming long tubular structures. These remodeled membranes probably form the viral factories that contain the replication complex. Displays NTPase activity, but no helicase activity. Induces the formation of convoluted membranes derived from the host ER. These remodeled membranes probably form the viral factories that contain the replication complex. Together with NS2 and NS4, initiates the formation of the replication complex. Functionally, probable key protein responsible for the formation of membrane alterations by the virus. Induces the formation of convoluted membranes derived from the host ER. These remodeled membranes probably form the viral factories that contain the replication complex. Together with NS2 and NTPase, initiates the formation of the replication complex. Its function is as follows. Viral genome-linked protein is covalently linked to the 5'-end of the positive-strand, negative-strand genomic RNAs and subgenomic RNA. Acts as a genome-linked replication primer. May recruit ribosome to viral RNA thereby promoting viral proteins translation. Interacts with host translation initiation complex to allow the translation of viral proteins. In terms of biological role, protease-polymerase p76 processes the polyprotein: Pro-Pol is first released by autocleavage, then all other proteins are cleaved. Cleaves host translation initiation factor eIF4G1, eIF4G2 and PABP1 thereby inducing a shutdown of host protein synthesis. This shutdown may not prevent viral mRNA from being translated since viral Vpg replaces the cap. Also functions as an RNA-directed RNA polymerase, which replicates genomic and antigenomic viral RNA by recognizing specific signals. Also transcribes a subgenomic mRNA by initiating RNA synthesis internally on antigenomic RNA. This sgRNA codes for structural proteins. Catalyzes the covalent attachment VPg with viral RNAs. In Vesicular exanthema of swine virus serotype A48 (isolate Swine/United States/A48/1948) (VESV), this protein is Genome polyprotein.